A 235-amino-acid chain; its full sequence is Deoxyribose-phosphate aldolase (235 aa).

Residue aspartate 107 is the Proton donor/acceptor of the active site. Lysine 167 functions as the Schiff-base intermediate with acetaldehyde in the catalytic mechanism. Lysine 197 serves as the catalytic Proton donor/acceptor.

The protein belongs to the DeoC/FbaB aldolase family. DeoC type 1 subfamily. As to quaternary structure, homotetramer.

The protein resides in the cytoplasm. It catalyses the reaction 2-deoxy-D-ribose 5-phosphate = D-glyceraldehyde 3-phosphate + acetaldehyde. It functions in the pathway carbohydrate degradation; 2-deoxy-D-ribose 1-phosphate degradation; D-glyceraldehyde 3-phosphate and acetaldehyde from 2-deoxy-alpha-D-ribose 1-phosphate: step 2/2. In terms of biological role, catalyzes a reversible aldol reaction between acetaldehyde and D-glyceraldehyde 3-phosphate to generate 2-deoxy-D-ribose 5-phosphate. The polypeptide is Deoxyribose-phosphate aldolase (Aeropyrum pernix (strain ATCC 700893 / DSM 11879 / JCM 9820 / NBRC 100138 / K1)).